Consider the following 291-residue polypeptide: 4-hydroxy-tetrahydrodipicolinate synthase (291 aa).

T45 is a binding site for pyruvate. The active-site Proton donor/acceptor is the Y133. The active-site Schiff-base intermediate with substrate is K161. A pyruvate-binding site is contributed by I203.

It belongs to the DapA family. As to quaternary structure, homotetramer; dimer of dimers.

It is found in the cytoplasm. It catalyses the reaction L-aspartate 4-semialdehyde + pyruvate = (2S,4S)-4-hydroxy-2,3,4,5-tetrahydrodipicolinate + H2O + H(+). It participates in amino-acid biosynthesis; L-lysine biosynthesis via DAP pathway; (S)-tetrahydrodipicolinate from L-aspartate: step 3/4. Its function is as follows. Catalyzes the condensation of (S)-aspartate-beta-semialdehyde [(S)-ASA] and pyruvate to 4-hydroxy-tetrahydrodipicolinate (HTPA). This is 4-hydroxy-tetrahydrodipicolinate synthase from Laribacter hongkongensis (strain HLHK9).